The following is a 321-amino-acid chain: NADH-quinone oxidoreductase subunit H (321 aa).

A run of 8 helical transmembrane segments spans residues 9-29 (LLAI…GAYM), 78-98 (IIFT…FAIM), 111-131 (IGIL…LLGG), 156-176 (FLGL…ISTI), 183-203 (IWNI…GLAI), 234-254 (FFIG…TLFF), 262-282 (LPPY…FILI), and 296-316 (ILGW…TAIV).

Belongs to the complex I subunit 1 family. As to quaternary structure, NDH-1 is composed of 14 different subunits. Subunits NuoA, H, J, K, L, M, N constitute the membrane sector of the complex.

Its subcellular location is the cell membrane. The enzyme catalyses a quinone + NADH + 5 H(+)(in) = a quinol + NAD(+) + 4 H(+)(out). In terms of biological role, NDH-1 shuttles electrons from NADH, via FMN and iron-sulfur (Fe-S) centers, to quinones in the respiratory chain. The immediate electron acceptor for the enzyme in this species is believed to be ubiquinone. Couples the redox reaction to proton translocation (for every two electrons transferred, four hydrogen ions are translocated across the cytoplasmic membrane), and thus conserves the redox energy in a proton gradient. This subunit may bind ubiquinone. This Baumannia cicadellinicola subsp. Homalodisca coagulata protein is NADH-quinone oxidoreductase subunit H.